We begin with the raw amino-acid sequence, 101 residues long: Large ribosomal subunit protein bL28 (101 aa).

The protein belongs to the bacterial ribosomal protein bL28 family.

This chain is Large ribosomal subunit protein bL28, found in Methylorubrum populi (strain ATCC BAA-705 / NCIMB 13946 / BJ001) (Methylobacterium populi).